We begin with the raw amino-acid sequence, 240 residues long: Orotidine 5'-phosphate decarboxylase (240 aa).

Substrate contacts are provided by residues aspartate 15, lysine 37, 64–73 (DLKYHDIPNT), threonine 125, arginine 186, glutamine 195, glycine 215, and arginine 216. The active-site Proton donor is lysine 66.

Belongs to the OMP decarboxylase family. Type 1 subfamily. As to quaternary structure, homodimer.

It catalyses the reaction orotidine 5'-phosphate + H(+) = UMP + CO2. It participates in pyrimidine metabolism; UMP biosynthesis via de novo pathway; UMP from orotate: step 2/2. Catalyzes the decarboxylation of orotidine 5'-monophosphate (OMP) to uridine 5'-monophosphate (UMP). This chain is Orotidine 5'-phosphate decarboxylase, found in Pelobacter propionicus (strain DSM 2379 / NBRC 103807 / OttBd1).